The sequence spans 285 residues: Formate channel FocA (285 aa).

The Cytoplasmic portion of the chain corresponds to Met-1–His-30. The helical transmembrane segment at Pro-31–Thr-56 threads the bilayer. The Periplasmic segment spans residues Thr-57–Phe-64. Residues Gly-65 to Cys-85 traverse the membrane as a helical segment. The Cytoplasmic segment spans residues Gly-86–Lys-112. Residues Asn-113 to Ser-135 traverse the membrane as a helical segment. The Periplasmic portion of the chain corresponds to Gly-136–Thr-160. A helical membrane pass occupies residues Phe-161–Met-181. The Cytoplasmic portion of the chain corresponds to Ser-182 to Ser-187. Residues Leu-188–Ser-205 form a helical membrane-spanning segment. Residues Gly-206–Asn-249 are Periplasmic-facing. Residues Phe-250–Val-276 form a helical membrane-spanning segment. The Cytoplasmic segment spans residues Ile-277–His-285.

It belongs to the FNT transporter (TC 1.A.16) family. As to quaternary structure, homopentamer.

The protein localises to the cell inner membrane. It carries out the reaction formate(in) = formate(out). Involved in the bidirectional transport of formate during mixed-acid fermentation. Functions to maintain relatively constant intracellular formate levels during growth, using different mechanisms for efflux and uptake of the anion. Is impermeable to water. This Escherichia coli O157:H7 protein is Formate channel FocA.